A 218-amino-acid polypeptide reads, in one-letter code: MIP18 family protein galla-1 (218 aa).

The tract at residues 1 to 59 (MLSYIKRKLSESDSGVSSVATVTSSCGGDSGRAGGTGSSESGTGSSSASISGRSQNADE) is disordered. The segment covering 12–27 (SDSGVSSVATVTSSCG) has biased composition (low complexity). A Phosphoserine modification is found at Ser-14. Gly residues predominate over residues 28 to 37 (GDSGRAGGTG). The segment covering 38–54 (SSESGTGSSSASISGRS) has biased composition (low complexity). A Phosphoserine modification is found at Ser-65.

It belongs to the MIP18 family. In terms of assembly, component of the CGX complex composed of crb, galla (galla-1 or galla-2) and Xpd. Interacts with crb (via intracellular domain). Is not able to interact with Xpd in the absence of crb.

The protein resides in the apical cell membrane. The protein localises to the cytoplasm. It is found in the cytoskeleton. Its subcellular location is the spindle. Functionally, component of the crb-galla-Xpd (CGX) complex which is essential for proper mitotic chromosome segregation in early embryos. The CGX complex is also required for cell proliferation in developing wing disks. In the CGX complex, acts with crb to recruit Xpd thus forming the functional complex. The sequence is that of MIP18 family protein galla-1 from Drosophila melanogaster (Fruit fly).